A 512-amino-acid polypeptide reads, in one-letter code: ATP synthase subunit alpha (512 aa).

169 to 176 (GDRQTGKT) serves as a coordination point for ATP.

Belongs to the ATPase alpha/beta chains family. F-type ATPases have 2 components, CF(1) - the catalytic core - and CF(0) - the membrane proton channel. CF(1) has five subunits: alpha(3), beta(3), gamma(1), delta(1), epsilon(1). CF(0) has three main subunits: a(1), b(2) and c(9-12). The alpha and beta chains form an alternating ring which encloses part of the gamma chain. CF(1) is attached to CF(0) by a central stalk formed by the gamma and epsilon chains, while a peripheral stalk is formed by the delta and b chains.

Its subcellular location is the cell inner membrane. The catalysed reaction is ATP + H2O + 4 H(+)(in) = ADP + phosphate + 5 H(+)(out). Its function is as follows. Produces ATP from ADP in the presence of a proton gradient across the membrane. The alpha chain is a regulatory subunit. In Dechloromonas aromatica (strain RCB), this protein is ATP synthase subunit alpha.